The chain runs to 231 residues: GrpE protein homolog, mitochondrial (231 aa).

The disordered stretch occupies residues 49 to 71; the sequence is SEKAGEKAEEKAEEQNLSAEEQK.

The protein belongs to the GrpE family. In terms of assembly, component of the PAM complex, at least composed of mtHsp70, MGE1, TIM44, PAM16, PAM17 and PAM18.

It localises to the mitochondrion matrix. Essential component of the PAM complex, a complex required for the translocation of transit peptide-containing proteins from the inner membrane into the mitochondrial matrix in an ATP-dependent manner. Seems to control the nucleotide-dependent binding of SSC1 to substrate proteins. The polypeptide is GrpE protein homolog, mitochondrial (mge1) (Candida glabrata (strain ATCC 2001 / BCRC 20586 / JCM 3761 / NBRC 0622 / NRRL Y-65 / CBS 138) (Yeast)).